Consider the following 480-residue polypeptide: Glycerol-3-phosphate transporter (480 aa).

The Cytoplasmic segment spans residues 1 to 36; the sequence is MFGPFKPAPHIAELPAEKIDSTYKRLRWQVFAGIFF. A helical transmembrane segment spans residues 37 to 57; that stretch reads GYAAYYFVRANFDLAQPGLIQ. At 58-64 the chain is on the periplasmic side; it reads AGLYSKA. A helical transmembrane segment spans residues 65–85; it reads ELGVIGSAAGLAYGLSKFVMA. Residues 86–94 are Cytoplasmic-facing; the sequence is GMSDRSNPR. Residues 95-113 traverse the membrane as a helical segment; it reads VFLPFGLLLSGLCMTLMGL. Over 114–121 the chain is Periplasmic; that stretch reads FPWATSGI. The helical transmembrane segment at 122-142 threads the bilayer; that stretch reads AIMWVMIFLNGWFQGMGWPPC. Residues 143–161 lie on the Cytoplasmic side of the membrane; that stretch reads GRTMVHWWSKSERGTIVSI. A helical transmembrane segment spans residues 162–181; sequence WNTAHNIGGMVPGAMVLLAS. Topologically, residues 182 to 201 are periplasmic; that stretch reads AIFFSTHGIEAQAKDVWQQS. Residues 202–219 form a helical membrane-spanning segment; sequence LYFPGIAAMIFAIPVYFV. The Cytoplasmic portion of the chain corresponds to 220 to 274; the sequence is MRDTPQSCGLPSIEKWRNDYPDDYNEKTYENDLTAKEIFVTYVLKNKLLWYIAIA. The chain crosses the membrane as a helical span at residues 275-295; sequence NVFVYLIRYGVLKWSPVYLSE. Over 296–300 the chain is Periplasmic; that stretch reads VKHFN. A helical transmembrane segment spans residues 301–321; that stretch reads IKGTAWAYTIYELAAVPGTLL. Residues 322–334 are Cytoplasmic-facing; it reads CGWVSDKVFKGKR. The chain crosses the membrane as a helical span at residues 335–354; the sequence is GLTGFIFMILTTAAVVAYWM. The Periplasmic segment spans residues 355–359; that stretch reads NPATP. Residues 360 to 396 traverse the membrane as a helical segment; that stretch reads EAELANYSAWYENPYQLTDFVLMTLIGFLIYGPVMLI. Residues 397-415 are Cytoplasmic-facing; that stretch reads GLHALELAPKKAAGTAAGF. Residues 416-437 form a helical membrane-spanning segment; it reads TGLFGYLGGTVSASAVIGWAAQ. Over 438-442 the chain is Periplasmic; sequence HYGWD. A helical membrane pass occupies residues 443-463; the sequence is GGFYVMIGGGVLAVLLLLIVM. Topologically, residues 464–479 are cytoplasmic; sequence VEEGKHKAKLGDTYGT.

It belongs to the major facilitator superfamily. Organophosphate:Pi antiporter (OPA) (TC 2.A.1.4) family.

Its subcellular location is the cell inner membrane. Responsible for glycerol-3-phosphate uptake. In Haemophilus influenzae (strain ATCC 51907 / DSM 11121 / KW20 / Rd), this protein is Glycerol-3-phosphate transporter (glpT).